A 209-amino-acid polypeptide reads, in one-letter code: Outer-membrane lipoprotein carrier protein (209 aa).

An N-terminal signal peptide occupies residues 1 to 21; sequence MKLLKLLSVAALSAASMMANA.

Belongs to the LolA family. In terms of assembly, monomer.

Its subcellular location is the periplasm. Its function is as follows. Participates in the translocation of lipoproteins from the inner membrane to the outer membrane. Only forms a complex with a lipoprotein if the residue after the N-terminal Cys is not an aspartate (The Asp acts as a targeting signal to indicate that the lipoprotein should stay in the inner membrane). The sequence is that of Outer-membrane lipoprotein carrier protein from Hahella chejuensis (strain KCTC 2396).